Reading from the N-terminus, the 101-residue chain is Interleukin-8 (101 aa).

An N-terminal signal peptide occupies residues 1–22 (MTSKLAVALLAAFLLSAALCEG). Arg27 is modified (citrulline). Cystine bridges form between Cys34–Cys61 and Cys36–Cys77.

Belongs to the intercrine alpha (chemokine CxC) family. In terms of assembly, homodimer. Interacts with TNFAIP6 (via Link domain); this interaction interferes with chemokine binding to glycosaminoglycans. In terms of processing, citrullination at Arg-27 prevents proteolysis, and dampens tissue inflammation, it also enhances leukocytosis, possibly through impaired chemokine clearance from the blood circulation.

The protein resides in the secreted. Its function is as follows. Chemotactic factor that mediates inflammatory response by attracting neutrophils, basophils, and T-cells to clear pathogens and protect the host from infection. Also plays an important role in neutrophil activation. Released in response to an inflammatory stimulus, exerts its effect by binding to the G-protein-coupled receptors CXCR1 and CXCR2, primarily found in neutrophils, monocytes and endothelial cells. G-protein heterotrimer (alpha, beta, gamma subunits) constitutively binds to CXCR1/CXCR2 receptor and activation by IL8 leads to beta and gamma subunits release from Galpha (GNAI2 in neutrophils) and activation of several downstream signaling pathways including PI3K and MAPK pathways. The sequence is that of Interleukin-8 (CXCL8) from Macaca mulatta (Rhesus macaque).